The sequence spans 182 residues: Large ribosomal subunit protein uL5 (182 aa).

The protein belongs to the universal ribosomal protein uL5 family. As to quaternary structure, part of the 50S ribosomal subunit; part of the 5S rRNA/L5/L18/L25 subcomplex. Contacts the 5S rRNA and the P site tRNA. Forms a bridge to the 30S subunit in the 70S ribosome.

Functionally, this is one of the proteins that bind and probably mediate the attachment of the 5S RNA into the large ribosomal subunit, where it forms part of the central protuberance. In the 70S ribosome it contacts protein S13 of the 30S subunit (bridge B1b), connecting the 2 subunits; this bridge is implicated in subunit movement. Contacts the P site tRNA; the 5S rRNA and some of its associated proteins might help stabilize positioning of ribosome-bound tRNAs. In Borreliella burgdorferi (strain ATCC 35210 / DSM 4680 / CIP 102532 / B31) (Borrelia burgdorferi), this protein is Large ribosomal subunit protein uL5.